Consider the following 372-residue polypeptide: Glutamate 5-kinase (372 aa).

Lysine 14 is a binding site for ATP. Serine 54, aspartate 141, and asparagine 153 together coordinate substrate. Position 173–174 (173–174 (TD)) interacts with ATP. One can recognise a PUA domain in the interval 280–358 (RGRVVIDGGA…SEIESVLGHL (79 aa)).

Belongs to the glutamate 5-kinase family.

It localises to the cytoplasm. The enzyme catalyses L-glutamate + ATP = L-glutamyl 5-phosphate + ADP. It functions in the pathway amino-acid biosynthesis; L-proline biosynthesis; L-glutamate 5-semialdehyde from L-glutamate: step 1/2. In terms of biological role, catalyzes the transfer of a phosphate group to glutamate to form L-glutamate 5-phosphate. In Cupriavidus taiwanensis (strain DSM 17343 / BCRC 17206 / CCUG 44338 / CIP 107171 / LMG 19424 / R1) (Ralstonia taiwanensis (strain LMG 19424)), this protein is Glutamate 5-kinase.